The following is a 157-amino-acid chain: Cyclic pyranopterin monophosphate synthase (157 aa).

Residues 74–76 (MCH) and 110–111 (ME) contribute to the substrate site. Asp125 is a catalytic residue.

This sequence belongs to the MoaC family. As to quaternary structure, homohexamer; trimer of dimers.

It carries out the reaction (8S)-3',8-cyclo-7,8-dihydroguanosine 5'-triphosphate = cyclic pyranopterin phosphate + diphosphate. It functions in the pathway cofactor biosynthesis; molybdopterin biosynthesis. In terms of biological role, catalyzes the conversion of (8S)-3',8-cyclo-7,8-dihydroguanosine 5'-triphosphate to cyclic pyranopterin monophosphate (cPMP). The polypeptide is Cyclic pyranopterin monophosphate synthase (Peptoclostridium acidaminophilum (Eubacterium acidaminophilum)).